Reading from the N-terminus, the 104-residue chain is Pyrimidine/purine nucleoside phosphorylase (104 aa).

Belongs to the nucleoside phosphorylase PpnP family.

The enzyme catalyses a purine D-ribonucleoside + phosphate = a purine nucleobase + alpha-D-ribose 1-phosphate. It catalyses the reaction adenosine + phosphate = alpha-D-ribose 1-phosphate + adenine. It carries out the reaction cytidine + phosphate = cytosine + alpha-D-ribose 1-phosphate. The catalysed reaction is guanosine + phosphate = alpha-D-ribose 1-phosphate + guanine. The enzyme catalyses inosine + phosphate = alpha-D-ribose 1-phosphate + hypoxanthine. It catalyses the reaction thymidine + phosphate = 2-deoxy-alpha-D-ribose 1-phosphate + thymine. It carries out the reaction uridine + phosphate = alpha-D-ribose 1-phosphate + uracil. The catalysed reaction is xanthosine + phosphate = alpha-D-ribose 1-phosphate + xanthine. Catalyzes the phosphorolysis of diverse nucleosides, yielding D-ribose 1-phosphate and the respective free bases. Can use uridine, adenosine, guanosine, cytidine, thymidine, inosine and xanthosine as substrates. Also catalyzes the reverse reactions. In Syntrophotalea carbinolica (strain DSM 2380 / NBRC 103641 / GraBd1) (Pelobacter carbinolicus), this protein is Pyrimidine/purine nucleoside phosphorylase.